We begin with the raw amino-acid sequence, 366 residues long: Histidinol-phosphate aminotransferase 2 (366 aa).

Residues 1–11 show a composition bias toward polar residues; that stretch reads MQVKDQLSSLQ. A disordered region spans residues 1–21; sequence MQVKDQLSSLQPYKPGKSPEQ. At lysine 222 the chain carries N6-(pyridoxal phosphate)lysine.

Belongs to the class-II pyridoxal-phosphate-dependent aminotransferase family. Histidinol-phosphate aminotransferase subfamily. Homodimer. Pyridoxal 5'-phosphate serves as cofactor.

The enzyme catalyses L-histidinol phosphate + 2-oxoglutarate = 3-(imidazol-4-yl)-2-oxopropyl phosphate + L-glutamate. It functions in the pathway amino-acid biosynthesis; L-histidine biosynthesis; L-histidine from 5-phospho-alpha-D-ribose 1-diphosphate: step 7/9. The sequence is that of Histidinol-phosphate aminotransferase 2 from Bacillus thuringiensis subsp. konkukian (strain 97-27).